We begin with the raw amino-acid sequence, 365 residues long: DNA replication and repair protein RecF (365 aa).

Residue 30–37 participates in ATP binding; sequence GDNGEGKT.

This sequence belongs to the RecF family.

The protein resides in the cytoplasm. In terms of biological role, the RecF protein is involved in DNA metabolism; it is required for DNA replication and normal SOS inducibility. RecF binds preferentially to single-stranded, linear DNA. It also seems to bind ATP. This chain is DNA replication and repair protein RecF, found in Leptospira borgpetersenii serovar Hardjo-bovis (strain JB197).